Reading from the N-terminus, the 200-residue chain is ATP-dependent Clp protease proteolytic subunit 2 (200 aa).

The active-site Nucleophile is the Ser99. Residue His124 is part of the active site.

The protein belongs to the peptidase S14 family. Fourteen ClpP subunits assemble into 2 heptameric rings which stack back to back to give a disk-like structure with a central cavity, resembling the structure of eukaryotic proteasomes.

It is found in the cytoplasm. The catalysed reaction is Hydrolysis of proteins to small peptides in the presence of ATP and magnesium. alpha-casein is the usual test substrate. In the absence of ATP, only oligopeptides shorter than five residues are hydrolyzed (such as succinyl-Leu-Tyr-|-NHMec, and Leu-Tyr-Leu-|-Tyr-Trp, in which cleavage of the -Tyr-|-Leu- and -Tyr-|-Trp bonds also occurs).. Cleaves peptides in various proteins in a process that requires ATP hydrolysis. Has a chymotrypsin-like activity. Plays a major role in the degradation of misfolded proteins. The polypeptide is ATP-dependent Clp protease proteolytic subunit 2 (Treponema denticola (strain ATCC 35405 / DSM 14222 / CIP 103919 / JCM 8153 / KCTC 15104)).